The chain runs to 410 residues: Putative transporter AmpG 1 (410 aa).

A run of 12 helical transmembrane segments spans residues 5-25, 40-60, 76-96, 98-118, 141-161, 169-189, 217-237, 265-285, 290-310, 320-340, 356-378, and 383-402; these read LSII…TGNT, IGLL…APIF, LSWI…LSFL, PFDN…FSSM, GIYI…AIYL, EIYK…IVGV, ILKP…LILY, VGKF…GFIM, ILDS…LFII, LLFI…TAYI, YSFF…GYIV, and WQNF…LVLL.

The protein belongs to the major facilitator superfamily.

The protein localises to the cell inner membrane. In Rickettsia bellii (strain RML369-C), this protein is Putative transporter AmpG 1 (ampG1).